The sequence spans 91 residues: DNA-directed RNA polymerase subunit omega (91 aa).

It belongs to the RNA polymerase subunit omega family. As to quaternary structure, the RNAP catalytic core consists of 2 alpha, 1 beta, 1 beta' and 1 omega subunit. When a sigma factor is associated with the core the holoenzyme is formed, which can initiate transcription.

The enzyme catalyses RNA(n) + a ribonucleoside 5'-triphosphate = RNA(n+1) + diphosphate. In terms of biological role, promotes RNA polymerase assembly. Latches the N- and C-terminal regions of the beta' subunit thereby facilitating its interaction with the beta and alpha subunits. In Aeromonas hydrophila subsp. hydrophila (strain ATCC 7966 / DSM 30187 / BCRC 13018 / CCUG 14551 / JCM 1027 / KCTC 2358 / NCIMB 9240 / NCTC 8049), this protein is DNA-directed RNA polymerase subunit omega.